The primary structure comprises 94 residues: Large ribosomal subunit protein bL25 (94 aa).

The protein belongs to the bacterial ribosomal protein bL25 family. In terms of assembly, part of the 50S ribosomal subunit; part of the 5S rRNA/L5/L18/L25 subcomplex. Contacts the 5S rRNA. Binds to the 5S rRNA independently of L5 and L18.

In terms of biological role, this is one of the proteins that binds to the 5S RNA in the ribosome where it forms part of the central protuberance. This chain is Large ribosomal subunit protein bL25, found in Salmonella arizonae (strain ATCC BAA-731 / CDC346-86 / RSK2980).